The primary structure comprises 73 residues: U3-agatoxin-Ao1k (73 aa).

The first 20 residues, 1–20 (MRTIISLLLLSAMVFAVIEA), serve as a signal peptide directing secretion. Residues 21 to 34 (ISLEEGLQLFEGER) constitute a propeptide that is removed on maturation. Cystine bridges form between Cys36-Cys52, Cys43-Cys57, Cys51-Cys67, and Cys59-Cys65. Ser71 bears the Serine amide mark.

It belongs to the neurotoxin 07 (Beta/delta-agtx) family. 03 (aga-4) subfamily. Aga sub-subfamily. In terms of tissue distribution, expressed by the venom gland.

Its subcellular location is the secreted. In terms of biological role, insecticidal neurotoxin that modulates the insect Nav channel (DmNaV1/tipE (para/tipE)) in a unique manner, with both the activation and inactivation processes being affected. The voltage dependence of activation is shifted toward more hyperpolarized potentials (analogous to site 4 toxins) and a non-inactivating persistent sodium current is induced (site 3-like action). Interestingly, both effects take place in a voltage-dependent manner, producing a bell-shaped curve between -80 and 0 mV. Compared to beta/delta-agatoxin-1 to -3, this toxin appears to affect the insect sodium channel only weakly. The sequence is that of U3-agatoxin-Ao1k from Agelena orientalis (Funnel-web spider).